The sequence spans 452 residues: Phosphatidylserine synthase 2 (452 aa).

At 1–35 (MAKGEWKRSGADDLPLPGRSECEVFDDGTNTFFWR) the chain is on the cytoplasmic side. Residues 36–56 (AHTVTVLFILTCALVYVTLLE) traverse the membrane as a helical segment. Residues 57–69 (ETPHDTAYNTKRG) are Lumenal-facing. The helical transmembrane segment at 70–90 (IVASILVFLCFGVTQAKDGPF) threads the bilayer. The Cytoplasmic segment spans residues 91-99 (TRPHPAYWR). A helical membrane pass occupies residues 100–120 (FWLCVSVVYELFLIFILFQTV). Topologically, residues 121 to 286 (HDGRQFMKYI…EWRPASNLRR (166 aa)) are lumenal. A helical transmembrane segment spans residues 287–307 (WLAVLGIIFMFLLAELNTFYL). Residue K308 is a topological domain, cytoplasmic. The chain crosses the membrane as a helical span at residues 309 to 329 (FVMWMPPEHYLVLFRLVFFVN). Topologically, residues 330–349 (VGGVAMREIYDFMDDPKFHK) are lumenal. The helical transmembrane segment at 350-370 (KLGQQAWIVAAITVTEFLIVV) threads the bilayer. The Cytoplasmic segment spans residues 371–376 (KYDPNT). The chain crosses the membrane as a helical span at residues 377–397 (IMLPIPFFITQCWILGIALIL). The Lumenal segment spans residues 398-452 (VWTLWRFFIRDITLRYKETRRRRQEVSSERDGSSSAPSGRSKLNGSMDSVRHRKS). The disordered stretch occupies residues 419-452 (RRQEVSSERDGSSSAPSGRSKLNGSMDSVRHRKS). Over residues 430 to 444 (SSSAPSGRSKLNGSM) the composition is skewed to polar residues.

Belongs to the phosphatidyl serine synthase family.

It localises to the endoplasmic reticulum membrane. It carries out the reaction a 1,2-diacyl-sn-glycero-3-phosphoethanolamine + L-serine = a 1,2-diacyl-sn-glycero-3-phospho-L-serine + ethanolamine. The catalysed reaction is 1-hexadecanoyl-2-(9Z-octadecenoyl)-sn-glycero-3-phosphoethanolamine + L-serine = 1-hexadecanoyl-2-(9Z-octadecenoyl)-sn-glycero-3-phospho-L-serine + ethanolamine. It catalyses the reaction 1-hexadecanoyl-2-(4Z,7Z,10Z,13Z,16Z,19Z-docosahexaenoyl)-sn-glycero-3-phosphoethanolamine + L-serine = 1-hexadecanoyl-2-(4Z,7Z,10Z,13Z,16Z,19Z-docosahexaenoyl)-sn-glycero-3-phosphoserine + ethanolamine. The enzyme catalyses 1-octadecanoyl-2-(5Z,8Z,11Z,14Z)-eicosatetraenoyl-sn-glycero-3-phosphoethanolamine + L-serine = 1-octadecanoyl-2-(5Z,8Z,11Z,14Z)-eicosatetraenoyl-sn-glycero-3-phosphoserine + ethanolamine. It carries out the reaction 1-octadecanoyl-2-(4Z,7Z,10Z,13Z,16Z,19Z-docosahexaenoyl)-sn-glycero-3-phosphoethanolamine + L-serine = 1-octadecanoyl-2-(4Z,7Z,10Z,13Z,16Z,19Z-docosahexaenoyl)-sn-glycero-3-phosphoserine + ethanolamine. The catalysed reaction is 1-(1Z-octadecenyl)-2-(4Z,7Z,10Z,13Z,16Z,19Z-docosahexaenoyl)-sn-glycero-3-phosphoethanolamine + L-serine = 1-(1Z-octadecenyl)-2-(4Z,7Z,10Z,13Z,16Z,19Z-docosahexaenoyl)-sn-glycero-3-phospho-L-serine + ethanolamine. It catalyses the reaction 1-octadecanoyl-2-(9Z-octadecenoyl)-sn-glycero-3-phosphoethanolamine + L-serine = 1-octadecanoyl-2-(9Z-octadecenoyl)-sn-glycero-3-phospho-L-serine + ethanolamine. The enzyme catalyses 1-(1Z-octadecenyl)-2-(9Z-octadecenoyl)-sn-glycero-3-phosphoethanolamine + L-serine = 1-(1Z-octadecenyl)-2-(9Z-octadecenoyl)-sn-glycero-3-phospho-L-serine + ethanolamine. It carries out the reaction 1-(1Z-octadecenyl)-2-(5Z,8Z,11Z,14Z- eicosatetraenoyl)-sn-glycero-3-phosphoethanolamine + L-serine = 1-(1Z-octadecenyl)-2-(5Z,8Z,11Z,14Z-eicosatetraenoyl)-sn-glycero-3-phospho-L-serine + ethanolamine. Its pathway is phospholipid metabolism; phosphatidylserine biosynthesis. Catalyzes a base-exchange reaction in which the polar head group of phosphatidylethanolamine (PE) or phosphatidylcholine (PC) is replaced by L-serine. Catalyzes the conversion of phosphatatidylethanolamine and does not act on phosphatidylcholine. Can utilize both phosphatidylethanolamine (PE) plasmalogen and diacyl PE as substrate and the latter is six times better utilized, indicating the importance of an ester linkage at the sn-1 position. Although it shows no sn-1 fatty acyl preference, exhibits significant preference towards docosahexaenoic acid (22:6n-3) compared with 18:1 or 20:4 at the sn-2 position. The sequence is that of Phosphatidylserine synthase 2 (ptdss2) from Danio rerio (Zebrafish).